We begin with the raw amino-acid sequence, 750 residues long: E3 ubiquitin-protein ligase rfwd3.S (750 aa).

The interval 92–206 (RQAAEQRSSV…GAAPPAEPAP (115 aa)) is disordered. A compositionally biased stretch (basic residues) spans 105-116 (RVQRRSTRRHQR). Residues 122–144 (TAGTSSRAALSNFFQINRTQGVA) are compositionally biased toward polar residues. Acidic residues predominate over residues 168–181 (SSDETVELSEEEEG). The RING-type; degenerate zinc-finger motif lies at 263 to 307 (CAICFEPWTNAGQHRLSALRCGHLFGFTCIERWLKGGAAKCPQCN). The segment covering 387-405 (TSMQASSSRSTISGSLSSS) has biased composition (low complexity). A disordered region spans residues 387–406 (TSMQASSSRSTISGSLSSSQ). 3 WD repeats span residues 470 to 510 (IHSK…VVQT), 512 to 552 (NTGR…NCVQ), and 558 to 603 (GSRC…YRPH).

Requires [4Fe-4S] cluster as cofactor.

It localises to the nucleus. It is found in the PML body. The protein resides in the cytoplasm. The enzyme catalyses S-ubiquitinyl-[E2 ubiquitin-conjugating enzyme]-L-cysteine + [acceptor protein]-L-lysine = [E2 ubiquitin-conjugating enzyme]-L-cysteine + N(6)-ubiquitinyl-[acceptor protein]-L-lysine.. It participates in protein modification; protein ubiquitination. In terms of biological role, E3 ubiquitin-protein ligase required for the repair of DNA interstrand cross-links (ICL) in response to DNA damage. Plays a key role in RPA-mediated DNA damage signaling and repair. Required to translesion DNA synthesis across DNA-protein cross-link adducts by catalyzing ubiquitination of proteins on single-stranded DNA (ssDNA). Mediates ubiquitination of the hmces DNA-protein cross-link, possibly promoting its degradation. In Xenopus laevis (African clawed frog), this protein is E3 ubiquitin-protein ligase rfwd3.S (rfwd3.S).